A 430-amino-acid chain; its full sequence is Spermatogenic leucine zipper protein 1 (430 aa).

The interval 1 to 25 (MASSAKSAEMPTISKTVNPTPDPHQ) is disordered. A coiled-coil region spans residues 62 to 102 (EQQTAQKFNNLLKEIKDILKNMAGFEEKITEAKELFEETNI). Ser107 carries the post-translational modification Phosphoserine. Residues 166–177 (KINEMLSTNLPV) form a helix-loop-helix motif region. Residues 178–244 (SLAPEKEDNE…NVQEETMKIR (67 aa)) are basic motif. 2 coiled-coil regions span residues 214 to 269 (LEEK…KLIK) and 316 to 351 (SLQLMAALLENECQILQQRVEILKELHHQKQGTLQE). At Ser258 the chain carries Phosphoserine. The tract at residues 303–324 (LEEQVKKLSHDTYSLQLMAALL) is leucine-zipper.

In terms of assembly, interacts with PPP1CC isoform gamma-2. Phosphorylated by MAPK1/ERK2 and MAPK3/ERK1. Specifically and strongly expressed in the testis. Expressed in several tumor cell lines.

It is found in the cytoplasm. The protein resides in the nucleus. Its function is as follows. Transcription factor that binds to the DNA sequence 5'-CANNTG-3'(E box) and the G-box motif. May play an important role in the regulation of cell proliferation and differentiation during spermatogenesis. This Homo sapiens (Human) protein is Spermatogenic leucine zipper protein 1 (SPZ1).